Consider the following 150-residue polypeptide: Globin-2 (150 aa).

One can recognise a Globin domain in the interval 11 to 150 (PLSDAEKNKI…MICILLSSAY (140 aa)). Residues histidine 74 and histidine 106 each contribute to the heme b site.

This sequence belongs to the globin family. Monomer.

The polypeptide is Globin-2 (Mordacia mordax (Southern hemisphere lamprey)).